Here is a 177-residue protein sequence, read N- to C-terminus: MNKEREARKYLRLLSVRRCRHIATIVELVREVIEPAILAPYELVDIEYGKMGGDYVLSVFVDKPEGITVNDTADLTDIISPLLDQIKPDPFPEQYFLEVTSPGLERPLKTKEQLADAVGSYIHVSLYKAVDKQKVFEGTLLSFEEDVLHMEYLDKTRRKEVEIPYSLVSKARLAVKF.

Belongs to the RimP family.

Its subcellular location is the cytoplasm. Functionally, required for maturation of 30S ribosomal subunits. The sequence is that of Ribosome maturation factor RimP from Streptococcus sanguinis (strain SK36).